The sequence spans 394 residues: MATVDRWLLPDGIEEVLPPEAARIEAARRQVLDLFHRWGYEFVVTPHIEYLESLLTGAGQDLDLRTFKVTDPASGRLMGFRADITPQVARMDAHSLRREGPSRLCYAGSVLHAQPRALSTSRSPIQLGAELYGDPSPASDVEVISLMLEMLEMAEVPDVHMDLGHVGIYRGLARAAGLSGEVEQQLFDALQRKAVDEVEALTADLPAELRGMLRALAELCGGRDALEQGRARLAAAPADVQVALNELIEIADSLAGRFPGLPLYFDLGELRGYHYHTGVVFAAFVPGVGQSIAQGGRYDDIGADFGRARPATGFSTDLKSLVTLGQARLDQAVSGIWAPAEGAGLWQAVQRLRRDGQRVVQALPGQDAASAREAGCDRQLALRDGNWQVAPLAS.

This sequence belongs to the class-II aminoacyl-tRNA synthetase family. HisZ subfamily. As to quaternary structure, heteromultimer composed of HisG and HisZ subunits.

Its subcellular location is the cytoplasm. It participates in amino-acid biosynthesis; L-histidine biosynthesis; L-histidine from 5-phospho-alpha-D-ribose 1-diphosphate: step 1/9. Functionally, required for the first step of histidine biosynthesis. May allow the feedback regulation of ATP phosphoribosyltransferase activity by histidine. The chain is ATP phosphoribosyltransferase regulatory subunit from Pseudomonas aeruginosa (strain LESB58).